The following is a 155-amino-acid chain: Transcriptional regulator MraZ (155 aa).

2 SpoVT-AbrB domains span residues 15–62 (TYEN…GMDR) and 93–136 (SEEL…NPTA).

Belongs to the MraZ family. As to quaternary structure, forms oligomers.

The protein localises to the cytoplasm. It is found in the nucleoid. The protein is Transcriptional regulator MraZ of Rhodospirillum rubrum (strain ATCC 11170 / ATH 1.1.1 / DSM 467 / LMG 4362 / NCIMB 8255 / S1).